The primary structure comprises 966 residues: Regulator of G-protein signaling 3 (966 aa).

Residues 18 to 95 (QITIRRGKDG…EIILLVWRVV (78 aa)) enclose the PDZ domain. A disordered region spans residues 115–135 (THDLLSPPNKREKNCTHGAPV). R167 is subject to Omega-N-methylarginine. Disordered regions lie at residues 403-618 (EADE…TGAV) and 637-704 (YSQL…RVQN). Polar residues-rich tracts occupy residues 527–548 (PETS…TELP) and 576–594 (SSAS…SSLG). Residues 649–675 (GEDEDAEEGEEGGEGEEDEEDDTSDDN) show a composition bias toward acidic residues. Residues 676 to 686 (YGDRSEAKRSS) are compositionally biased toward basic and acidic residues. Phosphoserine is present on residues S712, S715, S747, and S776. Positions 806–830 (FRRRNESPGAQPASKTDKTTKSFKP) are disordered. Basic and acidic residues predominate over residues 820–830 (KTDKTTKSFKP). Positions 841–966 (SLEKLLLHKY…INQKKMSPPL (126 aa)) constitute an RGS domain.

In terms of assembly, binds the GNB1-GNG2 heterodimer. Binds EFNB1 and EFNB2. Post-translationally, phosphorylated by cyclic GMP-dependent protein kinase. In terms of processing, ISGylated. In terms of tissue distribution, detected in embryos from E8.5-16.5 in cortical ventricular zone, dorsal root ganglia and cerebellar primordia. Isoform 3 is detected in testis and in spermatocytes from newborn mice. Levels increase and reach a maximum after 21 days; after this they decrease again. Long isoforms are widely expressed.

Its subcellular location is the cytoplasm. The protein localises to the cell membrane. It localises to the nucleus. Down-regulates signaling from heterotrimeric G-proteins by increasing the GTPase activity of the alpha subunits, thereby driving them into their inactive GDP-bound form. Down-regulates G-protein-mediated release of inositol phosphates and activation of MAP kinases. This is Regulator of G-protein signaling 3 (Rgs3) from Mus musculus (Mouse).